Here is a 170-residue protein sequence, read N- to C-terminus: E1B protein, small T-antigen (170 aa).

A disordered region spans residues 137-170; it reads PAQPPHGLDPVREEEEEEEEEENLRAGLDPQTEL. Acidic residues predominate over residues 148–158; the sequence is REEEEEEEEEE.

This sequence belongs to the adenoviridae E1B 19 kDa protein family.

It is found in the host cell membrane. It localises to the host nucleus envelope. Its subcellular location is the host nucleus lamina. In terms of biological role, putative adenovirus Bcl-2 homolog that inhibits apoptosis induced by TNF or FAS pathways, as well as p53-mediated apoptosis. Without E1B 19K function, virus production is compromised because of premature death of host cell. Interacts with Bax protein in cell lysates. The sequence is that of E1B protein, small T-antigen from Homo sapiens (Human).